A 539-amino-acid chain; its full sequence is Putative cysteine ligase BshC (539 aa).

ADP-binding positions include S146 and 384–386 (ERH). The stretch at 455-475 (LLKNAAFIQDQLQFLERTVMK) forms a coiled coil. Residues 490 to 493 (RIQN), W506, and Y510 each bind ADP.

The protein belongs to the BshC family. Homodimer in solution.

Functionally, involved in bacillithiol (BSH) biosynthesis. May catalyze the last step of the pathway, the addition of cysteine to glucosamine malate (GlcN-Mal) to generate BSH. The protein is Putative cysteine ligase BshC of Bacillus subtilis (strain 168).